The chain runs to 306 residues: S-methyl-5'-thioadenosine phosphorylase (306 aa).

Phosphate is bound by residues T21, 63-64 (RH), and 96-97 (SA). M198 is a substrate binding site. S199 provides a ligand contact to phosphate. 222–224 (DYD) contacts substrate.

It belongs to the PNP/MTAP phosphorylase family. MTAP subfamily. Homotrimer.

The protein localises to the cytoplasm. Its subcellular location is the nucleus. The catalysed reaction is S-methyl-5'-thioadenosine + phosphate = 5-(methylsulfanyl)-alpha-D-ribose 1-phosphate + adenine. The protein operates within amino-acid biosynthesis; L-methionine biosynthesis via salvage pathway; S-methyl-5-thio-alpha-D-ribose 1-phosphate from S-methyl-5'-thioadenosine (phosphorylase route): step 1/1. Catalyzes the reversible phosphorylation of S-methyl-5'-thioadenosine (MTA) to adenine and 5-methylthioribose-1-phosphate. Involved in the breakdown of MTA, a major by-product of polyamine biosynthesis. Responsible for the first step in the methionine salvage pathway after MTA has been generated from S-adenosylmethionine. Has broad substrate specificity with 6-aminopurine nucleosides as preferred substrates. This chain is S-methyl-5'-thioadenosine phosphorylase, found in Sclerotinia sclerotiorum (strain ATCC 18683 / 1980 / Ss-1) (White mold).